Here is a 170-residue protein sequence, read N- to C-terminus: Shikimate kinase (170 aa).

15-20 (GAGKTT) contacts ATP. A Mg(2+)-binding site is contributed by Thr-19. Substrate contacts are provided by Asp-37, Arg-61, and Gly-83. Arg-121 provides a ligand contact to ATP. Residue Arg-140 participates in substrate binding.

The protein belongs to the shikimate kinase family. Monomer. The cofactor is Mg(2+).

The protein localises to the cytoplasm. It catalyses the reaction shikimate + ATP = 3-phosphoshikimate + ADP + H(+). Its pathway is metabolic intermediate biosynthesis; chorismate biosynthesis; chorismate from D-erythrose 4-phosphate and phosphoenolpyruvate: step 5/7. In terms of biological role, catalyzes the specific phosphorylation of the 3-hydroxyl group of shikimic acid using ATP as a cosubstrate. The sequence is that of Shikimate kinase from Neisseria gonorrhoeae (strain ATCC 700825 / FA 1090).